A 243-amino-acid polypeptide reads, in one-letter code: Protein VERNALIZATION 1 (243 aa).

Residues 1-61 (MGRGKVQLKR…GKLYEFATDS (61 aa)) form the MADS-box domain. A K-box domain is found at 88–178 (QGNWCHEYRK…QKELVEKQKA (91 aa)). A coiled-coil region spans residues 122 to 178 (LKELQQLEQQLESSLKHIRSRKNQLMHESISELQRKERSLQEENKALQKELVEKQKA). Residues 173–243 (VEKQKAHTQQ…PPWMVSHISG (71 aa)) form a disordered region. Positions 179–192 (HTQQAQWEQTHPQT) are enriched in polar residues.

It localises to the nucleus. Component of a grass-specific mechanism of vernalization, a process by which prolonged cold exposure provides competence to flower in daylengths longer than 12 hours. Involved in the exit of vernalization and confers flowering competency at the expense of freezing tolerance, probably by promoting the expression of VRN3; this process is essential in cv. Bd29-1 for flowering but seems do not occur in cv. Bd21. This is Protein VERNALIZATION 1 from Brachypodium distachyon (Purple false brome).